A 234-amino-acid polypeptide reads, in one-letter code: Protein-toxin resistance protein KTD1 (234 aa).

Topologically, residues 1–47 (MQTPSENTDVKMDTLDEPSAHLIEENVALPEDTFSSHLSYVLYEIAH) are cytoplasmic. The chain crosses the membrane as a helical span at residues 48-68 (CKPIMFMIIIIVSLISLIVLF). The interval 68 to 75 (FHDNDGCT) is required for resistance to killer toxin K28, a protein-toxin encoded by the M28 virus. The Extracellular portion of the chain corresponds to 69–76 (HDNDGCTV). The helical transmembrane segment at 77-97 (ILVMSLIVASMALMVVAAFTF) threads the bilayer. Over 98-234 (GKAITEQEFM…RKQYPDADLP (137 aa)) the chain is Cytoplasmic. The required for resistance to killer toxin K28, a protein-toxin encoded by the M28 virus stretch occupies residues 147 to 234 (FYSGKKCHEF…RKQYPDADLP (88 aa)). Residues 168-187 (SHSDSSSNSAEDTQSPVSAG) are disordered. Residues 177–187 (AEDTQSPVSAG) show a composition bias toward polar residues. Lys217 participates in a covalent cross-link: Glycyl lysine isopeptide (Lys-Gly) (interchain with G-Cter in ubiquitin).

It belongs to the DUP/COS family.

It is found in the vacuole membrane. Its subcellular location is the golgi apparatus. The protein resides in the trans-Golgi network membrane. It localises to the endosome membrane. In terms of biological role, confers resistance to killer toxin K28, a protein-toxin encoded by the M28 virus that uses S.cerevisiae as a host. Probably acts against K28 after endocytosis of the protein-toxin. The sequence is that of Protein-toxin resistance protein KTD1 from Saccharomyces cerevisiae (strain ATCC 204508 / S288c) (Baker's yeast).